The following is a 391-amino-acid chain: Succinate--CoA ligase [ADP-forming] subunit beta (391 aa).

Positions 9-248 (KDILRKFGVS…TGEEDPFEVE (240 aa)) constitute an ATP-grasp domain. ATP is bound by residues K50, 57–59 (GRG), E103, M106, and E111. The Mg(2+) site is built by N203 and D217. Residues N268 and 325–327 (GIV) contribute to the substrate site.

Belongs to the succinate/malate CoA ligase beta subunit family. As to quaternary structure, heterotetramer of two alpha and two beta subunits. The cofactor is Mg(2+).

The catalysed reaction is succinate + ATP + CoA = succinyl-CoA + ADP + phosphate. It catalyses the reaction GTP + succinate + CoA = succinyl-CoA + GDP + phosphate. Its pathway is carbohydrate metabolism; tricarboxylic acid cycle; succinate from succinyl-CoA (ligase route): step 1/1. Succinyl-CoA synthetase functions in the citric acid cycle (TCA), coupling the hydrolysis of succinyl-CoA to the synthesis of either ATP or GTP and thus represents the only step of substrate-level phosphorylation in the TCA. The beta subunit provides nucleotide specificity of the enzyme and binds the substrate succinate, while the binding sites for coenzyme A and phosphate are found in the alpha subunit. The sequence is that of Succinate--CoA ligase [ADP-forming] subunit beta from Chlorobium phaeobacteroides (strain BS1).